We begin with the raw amino-acid sequence, 543 residues long: Carboxypeptidase Y homolog A (543 aa).

The signal sequence occupies residues 1–17 (MKFLTTGLLATAALAAA). The propeptide occupies 18–124 (QEQHVLQAED…KLHNYDLRVK (107 aa)). 5 cysteine pairs are disulfide-bonded: cysteine 179–cysteine 419, cysteine 313–cysteine 327, cysteine 337–cysteine 360, cysteine 344–cysteine 353, and cysteine 382–cysteine 389. N-linked (GlcNAc...) asparagine glycosylation is present at asparagine 210. Serine 266 is a catalytic residue. Aspartate 458 is a catalytic residue. Asparagine 509 is a glycosylation site (N-linked (GlcNAc...) asparagine). Histidine 520 is a catalytic residue.

The protein belongs to the peptidase S10 family.

It localises to the vacuole. It carries out the reaction Release of a C-terminal amino acid with broad specificity.. Functionally, vacuolar carboxypeptidase involved in degradation of small peptides. Digests preferentially peptides containing an aliphatic or hydrophobic residue in P1' position, as well as methionine, leucine or phenylalanine in P1 position of ester substrate. The sequence is that of Carboxypeptidase Y homolog A (cpyA) from Trichophyton verrucosum (strain HKI 0517).